The following is a 701-amino-acid chain: Elongation factor G (701 aa).

Residues 8–290 form the tr-type G domain; that stretch reads TQYRNIGISA…AIIEYLPSPK (283 aa). Residues 17-24, 88-92, and 142-145 each bind GTP; these read AHIDAGKT, DTPGH, and NKMD.

The protein belongs to the TRAFAC class translation factor GTPase superfamily. Classic translation factor GTPase family. EF-G/EF-2 subfamily.

It localises to the cytoplasm. In terms of biological role, catalyzes the GTP-dependent ribosomal translocation step during translation elongation. During this step, the ribosome changes from the pre-translocational (PRE) to the post-translocational (POST) state as the newly formed A-site-bound peptidyl-tRNA and P-site-bound deacylated tRNA move to the P and E sites, respectively. Catalyzes the coordinated movement of the two tRNA molecules, the mRNA and conformational changes in the ribosome. The polypeptide is Elongation factor G (Buchnera aphidicola subsp. Cinara cedri (strain Cc)).